The sequence spans 243 residues: Probable 2-phosphosulfolactate phosphatase (243 aa).

The protein belongs to the ComB family. Requires Mg(2+) as cofactor.

It carries out the reaction (2R)-O-phospho-3-sulfolactate + H2O = (2R)-3-sulfolactate + phosphate. This is Probable 2-phosphosulfolactate phosphatase from Prochlorococcus marinus (strain MIT 9313).